Reading from the N-terminus, the 86-residue chain is U2-sicaritoxin-Li1b (86 aa).

Positions 1–20 (MKIELFLVVIFALAIHMATA) are cleaved as a signal peptide. A propeptide spanning residues 21–33 (EEVIESDIEPAER) is cleaved from the precursor. 4 disulfides stabilise this stretch: C35–C53, C42–C62, C52–C71, and C64–C69. K85 is modified (lysine amide).

The protein belongs to the neurotoxin 39 family. Expressed by the venom gland.

Its subcellular location is the secreted. Its function is as follows. Toxin active against S.frugiperda larvae. May act on sodium channels (Nav). This is U2-sicaritoxin-Li1b from Loxosceles intermedia (Brown spider).